Here is a 221-residue protein sequence, read N- to C-terminus: Octanoyltransferase (221 aa).

Residues proline 40–leucine 218 enclose the BPL/LPL catalytic domain. Substrate-binding positions include arginine 82 to histidine 89, alanine 149 to glycine 151, and glycine 162 to alanine 164. The Acyl-thioester intermediate role is filled by cysteine 180.

The protein belongs to the LipB family.

It is found in the cytoplasm. It catalyses the reaction octanoyl-[ACP] + L-lysyl-[protein] = N(6)-octanoyl-L-lysyl-[protein] + holo-[ACP] + H(+). It functions in the pathway protein modification; protein lipoylation via endogenous pathway; protein N(6)-(lipoyl)lysine from octanoyl-[acyl-carrier-protein]: step 1/2. Functionally, catalyzes the transfer of endogenously produced octanoic acid from octanoyl-acyl-carrier-protein onto the lipoyl domains of lipoate-dependent enzymes. Lipoyl-ACP can also act as a substrate although octanoyl-ACP is likely to be the physiological substrate. The polypeptide is Octanoyltransferase (Nostoc sp. (strain PCC 7120 / SAG 25.82 / UTEX 2576)).